A 156-amino-acid chain; its full sequence is Hexachlorocyclohexane dehydrochlorinase 2 (156 aa).

Asp-25 is an active-site residue. Catalysis depends on His-73, which acts as the Proton acceptor.

This sequence belongs to the HCH dehydrochlorinase family. Homotrimer.

Its subcellular location is the periplasm. The catalysed reaction is gamma-hexachlorocyclohexane = (3R,4S,5S,6R)-pentachlorocyclohexene + chloride + H(+). The enzyme catalyses (3R,4S,5S,6R)-pentachlorocyclohexene = (3R,6R)-1,3,4,6-tetrachlorocyclohexa-1,4-diene + chloride + H(+). Its pathway is xenobiotic degradation; hexachlorocyclohexane degradation. Its function is as follows. Catalyzes the conversion of the important environmental pollutant gamma-hexachlorocyclohexane (gamma-HCH or lindane) to 1,3,4,6-tetrachloro-1,4-cyclohexadiene (1,4-TCDN) via gamma-pentachlorocyclohexene (gamma-PCCH). Proceeds by two successive 1,2-anti conformationally dependent dehydrochlorinations. Also shows activity with alpha- and delta-HCH, giving alpha- and delta-PCCH respectively, but not with the beta isomer. In Sphingobium indicum (strain DSM 16412 / CCM 7286 / MTCC 6364 / B90A), this protein is Hexachlorocyclohexane dehydrochlorinase 2.